A 966-amino-acid polypeptide reads, in one-letter code: Catenin alpha-2 (966 aa).

The segment covering 924-940 (PEKKPLVKREKPEEYQT) has biased composition (basic and acidic residues). Positions 924–952 (PEKKPLVKREKPEEYQTRVRRGSQKKHIS) are disordered. Residues 941 to 951 (RVRRGSQKKHI) show a composition bias toward basic residues.

Belongs to the vinculin/alpha-catenin family.

It is found in the cell membrane. The protein resides in the cytoplasm. It localises to the cytoskeleton. The protein localises to the cell junction. Its subcellular location is the adherens junction. It is found in the cell projection. The protein resides in the axon. It localises to the nucleus. Functionally, may function as a linker between cadherin adhesion receptors and the cytoskeleton to regulate cell-cell adhesion and differentiation in the nervous system. In Xenopus laevis (African clawed frog), this protein is Catenin alpha-2 (ctnna2).